Consider the following 383-residue polypeptide: ATP phosphoribosyltransferase regulatory subunit (383 aa).

Belongs to the class-II aminoacyl-tRNA synthetase family. HisZ subfamily. As to quaternary structure, heteromultimer composed of HisG and HisZ subunits.

The protein localises to the cytoplasm. It functions in the pathway amino-acid biosynthesis; L-histidine biosynthesis; L-histidine from 5-phospho-alpha-D-ribose 1-diphosphate: step 1/9. Required for the first step of histidine biosynthesis. May allow the feedback regulation of ATP phosphoribosyltransferase activity by histidine. This is ATP phosphoribosyltransferase regulatory subunit from Neisseria gonorrhoeae (strain NCCP11945).